Consider the following 124-residue polypeptide: Small ribosomal subunit protein uS12c (124 aa).

The segment at 105–124 (AGVKDRRQSRSKYGAKRPKA) is disordered. The segment covering 113–124 (SRSKYGAKRPKA) has biased composition (basic residues).

The protein belongs to the universal ribosomal protein uS12 family. In terms of assembly, part of the 30S ribosomal subunit.

The protein localises to the plastid. Its subcellular location is the cyanelle. Its function is as follows. With S4 and S5 plays an important role in translational accuracy. Located at the interface of the 30S and 50S subunits. In Cyanophora paradoxa, this protein is Small ribosomal subunit protein uS12c (rps12).